The primary structure comprises 209 residues: Response regulator protein VraR (209 aa).

The 117-residue stretch at 4–120 (KVLFVDDHEM…DIADAVRKTY (117 aa)) folds into the Response regulatory domain. At Asp55 the chain carries 4-aspartylphosphate. One can recognise an HTH luxR-type domain in the interval 141 to 206 (RAELYEMLTE…QAVIYAFQHN (66 aa)). The segment at residues 165–184 (NQEIASASHITIKTVKTHVS) is a DNA-binding region (H-T-H motif).

Phosphorylated by VraS.

The protein resides in the cytoplasm. In terms of biological role, member of the two-component regulatory system VraS/VraR involved in the control of the cell wall peptidoglycan biosynthesis. In Staphylococcus epidermidis (strain ATCC 35984 / DSM 28319 / BCRC 17069 / CCUG 31568 / BM 3577 / RP62A), this protein is Response regulator protein VraR (vraR).